The sequence spans 297 residues: Probable oxidoreductase (297 aa).

9 to 33 contacts NAD(+); that stretch reads VVTGGASGLGAETVRALAAAGAEVT. A substrate-binding site is contributed by Ser-138. Tyr-164 acts as the Proton acceptor in catalysis.

Belongs to the short-chain dehydrogenases/reductases (SDR) family.

In Streptomyces lividans, this protein is Probable oxidoreductase.